The following is an 892-amino-acid chain: Translation initiation factor IF-2 (892 aa).

A disordered region spans residues 88–304 (KKRTFVKRDP…SSLQQGFQKP (217 aa)). 2 stretches are compositionally biased toward basic and acidic residues: residues 93–159 (VKRD…KDKV) and 166–216 (DMTK…EENK). Basic residues predominate over residues 254–269 (GRGRNAKAARPAKKGK). Basic and acidic residues predominate over residues 270–282 (HAESKADREEARA). The tr-type G domain maps to 391–560 (PRAPVVTIMG…LLQAEVLELK (170 aa)). The tract at residues 400-407 (GHVDHGKT) is G1. 400–407 (GHVDHGKT) is a GTP binding site. The interval 425-429 (GITQH) is G2. The G3 stretch occupies residues 446 to 449 (DTPG). Residues 446-450 (DTPGH) and 500-503 (NKID) each bind GTP. A G4 region spans residues 500–503 (NKID). Residues 536–538 (SAK) form a G5 region.

This sequence belongs to the TRAFAC class translation factor GTPase superfamily. Classic translation factor GTPase family. IF-2 subfamily.

Its subcellular location is the cytoplasm. Its function is as follows. One of the essential components for the initiation of protein synthesis. Protects formylmethionyl-tRNA from spontaneous hydrolysis and promotes its binding to the 30S ribosomal subunits. Also involved in the hydrolysis of GTP during the formation of the 70S ribosomal complex. This Salmonella choleraesuis (strain SC-B67) protein is Translation initiation factor IF-2.